Consider the following 187-residue polypeptide: Elongation factor P (187 aa).

This sequence belongs to the elongation factor P family.

The protein resides in the cytoplasm. The protein operates within protein biosynthesis; polypeptide chain elongation. In terms of biological role, involved in peptide bond synthesis. Stimulates efficient translation and peptide-bond synthesis on native or reconstituted 70S ribosomes in vitro. Probably functions indirectly by altering the affinity of the ribosome for aminoacyl-tRNA, thus increasing their reactivity as acceptors for peptidyl transferase. The chain is Elongation factor P from Rhodococcus jostii (strain RHA1).